Reading from the N-terminus, the 383-residue chain is Na(+)/H(+) antiporter NhaA (383 aa).

Transmembrane regions (helical) follow at residues 14-34 (AGGI…NSPL), 47-67 (FGMS…FLLI), 87-107 (IFPA…YVAF), 117-137 (GWAI…ALLG), 146-166 (VFLL…IALF), 171-191 (LSSM…MLNA), 205-225 (AILW…GVVI), 252-272 (VAFG…LEGV), 280-300 (MLPL…IFSF), 321-341 (IFAV…ISSL), and 356-376 (LGIL…LHFS).

This sequence belongs to the NhaA Na(+)/H(+) (TC 2.A.33) antiporter family.

Its subcellular location is the cell inner membrane. The catalysed reaction is Na(+)(in) + 2 H(+)(out) = Na(+)(out) + 2 H(+)(in). The enzyme catalyses Li(+)(in) + 2 H(+)(out) = Li(+)(out) + 2 H(+)(in). Its activity is regulated as follows. Activity is regulated by pH. Active at alkaline pH. Amiloride strongly reduces affinity for Na(+), but does not change the Vmax. Na(+)/H(+) antiporter that extrudes sodium in exchange for external protons. Can also transport lithium and potassium. The chain is Na(+)/H(+) antiporter NhaA from Vibrio parahaemolyticus serotype O3:K6 (strain RIMD 2210633).